A 174-amino-acid polypeptide reads, in one-letter code: MNMDWKNLIINIPDYPKAGINFKDITPLLANGAGFKAAIEEMAMICERQNAIPDVLACPEARGFIFAAALAHRLGIGFIPLRKPHKLPREVAHINYGLEYGEDCLEVHKQDIKKGMRIMMVDDVLATGGTMHACMNLLQSLGAEIIGAMFLLELTALKGREKLGTAAVYSLIQD.

Belongs to the purine/pyrimidine phosphoribosyltransferase family. As to quaternary structure, homodimer.

It is found in the cytoplasm. It carries out the reaction AMP + diphosphate = 5-phospho-alpha-D-ribose 1-diphosphate + adenine. Its pathway is purine metabolism; AMP biosynthesis via salvage pathway; AMP from adenine: step 1/1. Catalyzes a salvage reaction resulting in the formation of AMP, that is energically less costly than de novo synthesis. This chain is Adenine phosphoribosyltransferase, found in Dichelobacter nodosus (strain VCS1703A).